We begin with the raw amino-acid sequence, 200 residues long: 3-isopropylmalate dehydratase small subunit (200 aa).

This sequence belongs to the LeuD family. LeuD type 1 subfamily. As to quaternary structure, heterodimer of LeuC and LeuD.

It catalyses the reaction (2R,3S)-3-isopropylmalate = (2S)-2-isopropylmalate. The protein operates within amino-acid biosynthesis; L-leucine biosynthesis; L-leucine from 3-methyl-2-oxobutanoate: step 2/4. In terms of biological role, catalyzes the isomerization between 2-isopropylmalate and 3-isopropylmalate, via the formation of 2-isopropylmaleate. In Haemophilus influenzae (strain 86-028NP), this protein is 3-isopropylmalate dehydratase small subunit.